The primary structure comprises 270 residues: uncharacterized protein (270 aa).

The signal sequence occupies residues 1-22; that stretch reads MEYIKKIALYMSVLLLIIFIGG. A lipid anchor (N-palmitoyl cysteine) is attached at cysteine 23. A lipid anchor (S-diacylglycerol cysteine) is attached at cysteine 23.

The protein belongs to the staphylococcal tandem lipoprotein family.

Its subcellular location is the cell membrane. This is an uncharacterized protein from Staphylococcus aureus (strain MW2).